A 188-amino-acid chain; its full sequence is dTTP/UTP pyrophosphatase (188 aa).

Residue Asp67 is the Proton acceptor of the active site.

The protein belongs to the Maf family. YhdE subfamily. It depends on a divalent metal cation as a cofactor.

Its subcellular location is the cytoplasm. The catalysed reaction is dTTP + H2O = dTMP + diphosphate + H(+). It carries out the reaction UTP + H2O = UMP + diphosphate + H(+). In terms of biological role, nucleoside triphosphate pyrophosphatase that hydrolyzes dTTP and UTP. May have a dual role in cell division arrest and in preventing the incorporation of modified nucleotides into cellular nucleic acids. This chain is dTTP/UTP pyrophosphatase, found in Roseobacter denitrificans (strain ATCC 33942 / OCh 114) (Erythrobacter sp. (strain OCh 114)).